The following is a 479-amino-acid chain: Serine--tRNA ligase, mitochondrial (479 aa).

The transit peptide at 1–42 (MRLTNRRFSTFLGNALPSKKKGFIFMSQLLYLRTFSTHTSYL) directs the protein to the mitochondrion. 287-289 (TAE) contributes to the L-serine binding site. Residue 317–319 (RRE) participates in ATP binding. L-serine is bound at residue Glu340. 404–407 (EITS) contributes to the ATP binding site. Thr438 provides a ligand contact to L-serine.

Belongs to the class-II aminoacyl-tRNA synthetase family. Type-1 seryl-tRNA synthetase subfamily. Homodimer. The tRNA molecule probably binds across the dimer.

The protein localises to the mitochondrion matrix. The enzyme catalyses tRNA(Ser) + L-serine + ATP = L-seryl-tRNA(Ser) + AMP + diphosphate + H(+). In terms of biological role, catalyzes the attachment of serine to tRNA(Ser). Is also probably able to aminoacylate tRNA(Sec) with serine, to form the misacylated tRNA L-seryl-tRNA(Sec), which will be further converted into selenocysteinyl-tRNA(Sec). The polypeptide is Serine--tRNA ligase, mitochondrial (dia4) (Schizosaccharomyces pombe (strain 972 / ATCC 24843) (Fission yeast)).